The following is a 361-amino-acid chain: 5-exo-hydroxycamphor dehydrogenase (361 aa).

Zn(2+) contacts are provided by Cys-40, His-62, Cys-98, Cys-101, Cys-104, and Cys-170.

Belongs to the zinc-containing alcohol dehydrogenase family. Zn(2+) serves as cofactor.

The catalysed reaction is (1R,4R,5R)-5-hydroxycamphor + NAD(+) = (1R,4R)-bornane-2,5-dione + NADH + H(+). Its pathway is terpene metabolism; (R)-camphor degradation. The protein is 5-exo-hydroxycamphor dehydrogenase (camD) of Pseudomonas putida (Arthrobacter siderocapsulatus).